Here is a 407-residue protein sequence, read N- to C-terminus: Phosphonoacetate hydrolase (407 aa).

Residues Asp25, Thr64, Asp202, His206, Asp241, His242, and His368 each contribute to the Zn(2+) site. Substrate is bound by residues Thr64 and Asp202. Substrate-binding residues include His242 and His368.

Belongs to the alkaline phosphatase family. PhnA subfamily. In terms of assembly, homodimer. Requires Zn(2+) as cofactor.

It carries out the reaction phosphonoacetate + H2O = acetate + phosphate + H(+). Its function is as follows. Specifically hydrolyzes phosphonoacetate. Does not have activity on other organophosphonates or acetates. The sequence is that of Phosphonoacetate hydrolase from Pseudomonas putida (Arthrobacter siderocapsulatus).